We begin with the raw amino-acid sequence, 232 residues long: Putative N-acetylmannosamine-6-phosphate 2-epimerase (232 aa).

The protein belongs to the NanE family.

It catalyses the reaction an N-acyl-D-glucosamine 6-phosphate = an N-acyl-D-mannosamine 6-phosphate. It participates in amino-sugar metabolism; N-acetylneuraminate degradation; D-fructose 6-phosphate from N-acetylneuraminate: step 3/5. Converts N-acetylmannosamine-6-phosphate (ManNAc-6-P) to N-acetylglucosamine-6-phosphate (GlcNAc-6-P). The protein is Putative N-acetylmannosamine-6-phosphate 2-epimerase of Borreliella afzelii (strain PKo) (Borrelia afzelii).